We begin with the raw amino-acid sequence, 555 residues long: Urocanate hydratase (555 aa).

NAD(+) contacts are provided by residues 52–53 (GG), Gln130, 176–178 (GMG), Glu196, Arg201, 242–243 (NA), 263–267 (QTSAH), 272–273 (YL), and Tyr321. Residue Cys409 is part of the active site. Residue Gly491 coordinates NAD(+).

Belongs to the urocanase family. It depends on NAD(+) as a cofactor.

The protein localises to the cytoplasm. The enzyme catalyses 4-imidazolone-5-propanoate = trans-urocanate + H2O. Its pathway is amino-acid degradation; L-histidine degradation into L-glutamate; N-formimidoyl-L-glutamate from L-histidine: step 2/3. In terms of biological role, catalyzes the conversion of urocanate to 4-imidazolone-5-propionate. The sequence is that of Urocanate hydratase from Nocardioides sp. (strain ATCC BAA-499 / JS614).